The sequence spans 193 residues: MYAYLKGKIMTILPTHLVIEVSGIGYECLTPNPYRFNHQLDQMITLHTQLVVREDAQLLYGFKDEEEKAMFNALNKVTGIGPKSALAILATSTPQEIIKAIESESESYLIKFPGIGKKTARQIILDLKGKLTITDESELFKEVNDTLLNEALLAFEALGYSKREITKIEKELKKKQFSTVDEYVKQGLQMFVS.

Residues 1-63 (MYAYLKGKIM…EDAQLLYGFK (63 aa)) are domain I. A domain II region spans residues 64-141 (DEEEKAMFNA…TITDESELFK (78 aa)). Residues 141–142 (KE) are flexible linker. The tract at residues 143-193 (VNDTLLNEALLAFEALGYSKREITKIEKELKKKQFSTVDEYVKQGLQMFVS) is domain III.

The protein belongs to the RuvA family. As to quaternary structure, homotetramer. Forms an RuvA(8)-RuvB(12)-Holliday junction (HJ) complex. HJ DNA is sandwiched between 2 RuvA tetramers; dsDNA enters through RuvA and exits via RuvB. An RuvB hexamer assembles on each DNA strand where it exits the tetramer. Each RuvB hexamer is contacted by two RuvA subunits (via domain III) on 2 adjacent RuvB subunits; this complex drives branch migration. In the full resolvosome a probable DNA-RuvA(4)-RuvB(12)-RuvC(2) complex forms which resolves the HJ.

The protein resides in the cytoplasm. Functionally, the RuvA-RuvB-RuvC complex processes Holliday junction (HJ) DNA during genetic recombination and DNA repair, while the RuvA-RuvB complex plays an important role in the rescue of blocked DNA replication forks via replication fork reversal (RFR). RuvA specifically binds to HJ cruciform DNA, conferring on it an open structure. The RuvB hexamer acts as an ATP-dependent pump, pulling dsDNA into and through the RuvAB complex. HJ branch migration allows RuvC to scan DNA until it finds its consensus sequence, where it cleaves and resolves the cruciform DNA. In Macrococcus caseolyticus (strain JCSC5402) (Macrococcoides caseolyticum), this protein is Holliday junction branch migration complex subunit RuvA.